A 777-amino-acid polypeptide reads, in one-letter code: Ethylene receptor 4 (777 aa).

3 helical membrane-spanning segments follow: residues 49-69 (LLIA…ATCA), 77-97 (AVLH…LAAF), and 113-133 (AAKV…LTFI). Residues cysteine 88 and histidine 92 each contribute to the Cu cation site. The GAF domain maps to 184 to 344 (DAHAILRTTA…VVADQAAVAL (161 aa)). The region spanning 387-521 (AMCHAMRRPV…NTGSGACRLS (135 aa)) is the Histidine kinase domain. Position 390 is a phosphohistidine; by autocatalysis (histidine 390). The region spanning 645-774 (RVLLADDDAM…ALGAQLCRVL (130 aa)) is the Response regulatory domain. 4-aspartylphosphate is present on aspartate 696.

This sequence belongs to the ethylene receptor family. Cu cation serves as cofactor.

The protein localises to the endoplasmic reticulum membrane. The catalysed reaction is ATP + protein L-histidine = ADP + protein N-phospho-L-histidine.. In terms of biological role, ethylene receptor related to bacterial two-component regulators. Acts as a redundant negative regulator of ethylene signaling. The sequence is that of Ethylene receptor 4 (ETR4) from Oryza sativa subsp. japonica (Rice).